The sequence spans 93 residues: Aspartyl/glutamyl-tRNA(Asn/Gln) amidotransferase subunit C (93 aa).

The protein belongs to the GatC family. Heterotrimer of A, B and C subunits.

It carries out the reaction L-glutamyl-tRNA(Gln) + L-glutamine + ATP + H2O = L-glutaminyl-tRNA(Gln) + L-glutamate + ADP + phosphate + H(+). The catalysed reaction is L-aspartyl-tRNA(Asn) + L-glutamine + ATP + H2O = L-asparaginyl-tRNA(Asn) + L-glutamate + ADP + phosphate + 2 H(+). Its function is as follows. Allows the formation of correctly charged Asn-tRNA(Asn) or Gln-tRNA(Gln) through the transamidation of misacylated Asp-tRNA(Asn) or Glu-tRNA(Gln) in organisms which lack either or both of asparaginyl-tRNA or glutaminyl-tRNA synthetases. The reaction takes place in the presence of glutamine and ATP through an activated phospho-Asp-tRNA(Asn) or phospho-Glu-tRNA(Gln). In Nautilia profundicola (strain ATCC BAA-1463 / DSM 18972 / AmH), this protein is Aspartyl/glutamyl-tRNA(Asn/Gln) amidotransferase subunit C.